A 341-amino-acid chain; its full sequence is N-acetyl-gamma-glutamyl-phosphate reductase (341 aa).

The active site involves Cys149.

It belongs to the NAGSA dehydrogenase family. Type 1 subfamily.

The protein localises to the cytoplasm. The catalysed reaction is N-acetyl-L-glutamate 5-semialdehyde + phosphate + NADP(+) = N-acetyl-L-glutamyl 5-phosphate + NADPH + H(+). It functions in the pathway amino-acid biosynthesis; L-arginine biosynthesis; N(2)-acetyl-L-ornithine from L-glutamate: step 3/4. Its function is as follows. Catalyzes the NADPH-dependent reduction of N-acetyl-5-glutamyl phosphate to yield N-acetyl-L-glutamate 5-semialdehyde. The chain is N-acetyl-gamma-glutamyl-phosphate reductase from Methanocaldococcus jannaschii (strain ATCC 43067 / DSM 2661 / JAL-1 / JCM 10045 / NBRC 100440) (Methanococcus jannaschii).